The chain runs to 185 residues: uncharacterized protein (185 aa).

This is an uncharacterized protein from Alkalihalophilus pseudofirmus (strain ATCC BAA-2126 / JCM 17055 / OF4) (Bacillus pseudofirmus).